Here is a 213-residue protein sequence, read N- to C-terminus: Pyrrolidone-carboxylate peptidase (213 aa).

Catalysis depends on residues glutamate 80, cysteine 143, and histidine 165.

It belongs to the peptidase C15 family. In terms of assembly, homotetramer.

It is found in the cytoplasm. The catalysed reaction is Release of an N-terminal pyroglutamyl group from a polypeptide, the second amino acid generally not being Pro.. Removes 5-oxoproline from various penultimate amino acid residues except L-proline. The sequence is that of Pyrrolidone-carboxylate peptidase from Erwinia tasmaniensis (strain DSM 17950 / CFBP 7177 / CIP 109463 / NCPPB 4357 / Et1/99).